Reading from the N-terminus, the 318-residue chain is Death effector domain-containing protein (318 aa).

The region spanning 25–103 (SLHRMFDIVG…RHDLLPYVTL (79 aa)) is the DED domain. Residues 128–191 (PRALSDPEPR…SVTPDPKEKQ (64 aa)) are disordered.

As to quaternary structure, interacts with CASP8, CASP10, KRT8, KRT18, CASP3 and FADD. Homodimerizes and heterodimerizes with DEDD2. Post-translationally, exists predominantly in a mono- or diubiquitinated form. Widely expressed with highest levels in testis. Within the testis, highly expressed in germ cells but not expressed in Sertoli cells.

It is found in the cytoplasm. It localises to the nucleus. The protein resides in the nucleolus. In terms of biological role, a scaffold protein that directs CASP3 to certain substrates and facilitates their ordered degradation during apoptosis. May also play a role in mediating CASP3 cleavage of KRT18. Regulates degradation of intermediate filaments during apoptosis. May play a role in the general transcription machinery in the nucleus and might be an important regulator of the activity of GTF3C3. Inhibits DNA transcription in vitro. The protein is Death effector domain-containing protein (Dedd) of Rattus norvegicus (Rat).